We begin with the raw amino-acid sequence, 214 residues long: 3-demethoxyubiquinol 3-hydroxylase (214 aa).

Residues glutamate 63, glutamate 93, histidine 96, glutamate 145, glutamate 177, and histidine 180 each contribute to the Fe cation site.

The protein belongs to the COQ7 family. Fe cation is required as a cofactor.

It localises to the cell membrane. The catalysed reaction is a 5-methoxy-2-methyl-3-(all-trans-polyprenyl)benzene-1,4-diol + AH2 + O2 = a 3-demethylubiquinol + A + H2O. The protein operates within cofactor biosynthesis; ubiquinone biosynthesis. In terms of biological role, catalyzes the hydroxylation of 2-nonaprenyl-3-methyl-6-methoxy-1,4-benzoquinol during ubiquinone biosynthesis. The polypeptide is 3-demethoxyubiquinol 3-hydroxylase (Psychrobacter cryohalolentis (strain ATCC BAA-1226 / DSM 17306 / VKM B-2378 / K5)).